A 545-amino-acid polypeptide reads, in one-letter code: Afadin- and alpha-actinin-binding protein B (545 aa).

Coiled coils occupy residues 106 to 287 (RSKE…SQRK) and 358 to 442 (ARGD…AIRL). A disordered region spans residues 497 to 545 (HDRHLASSGDHYQRPRKTLPITPSSKHSLTQRESVAWRDSSISPNGTDF). Composition is skewed to polar residues over residues 517 to 529 (ITPS…TQRE) and 536 to 545 (SSISPNGTDF).

It belongs to the ADIP family. As to quaternary structure, interacts with WRAP73.

It is found in the cell junction. It localises to the adherens junction. Its subcellular location is the cytoplasm. The protein resides in the cytoskeleton. The protein localises to the microtubule organizing center. It is found in the centrosome. It localises to the centriolar satellite. Belongs to an adhesion system, which plays a role in the organization of homotypic, interneuronal and heterotypic cell-cell adherens junctions (AJs). Involved in cell movement. Acts as a centrosome maturation factor, probably by maintaining the integrity of the pericentriolar material and proper microtubule nucleation at mitotic spindle poles. The function seems to implicate at least in part WRAP73; the SSX2IP:WRAP73 complex is proposed to act as regulator of spindle anchoring at the mitotic centrosome. The polypeptide is Afadin- and alpha-actinin-binding protein B (ssx2ip-b) (Xenopus laevis (African clawed frog)).